The primary structure comprises 322 residues: uncharacterized protein (322 aa).

Low complexity predominate over residues 1–17; that stretch reads MASMAAAIAASRSAVMS. Positions 1 to 22 are disordered; that stretch reads MASMAAAIAASRSAVMSGNRPL. Ala2 carries the N-acetylalanine modification. Phosphoserine is present on Ser37. The tract at residues 81-104 is disordered; it reads AAAADAGDVRDPARFPGLRGPTGQ. Ser130 is modified (phosphoserine). 2 stretches are compositionally biased toward polar residues: residues 142–153 and 161–177; these read QEPSAATVTSDA and QGTQGSKPAQSSRSSSL. A disordered region spans residues 142 to 301; it reads QEPSAATVTS…DDDALFSEPA (160 aa). Ser176 carries the post-translational modification Phosphoserine. Residues 183-203 are compositionally biased toward basic and acidic residues; sequence ARKEEEAPFWKINAERSREGP. A compositionally biased stretch (polar residues) spans 245 to 255; sequence QEQQTLPSVSA.

It is found in the cytoplasm. This is an uncharacterized protein from Mus musculus (Mouse).